The following is a 218-amino-acid chain: Small ribosomal subunit protein uS3 (218 aa).

The region spanning 38-107 (VREYIEKRLK…RVHVNVVEVK (70 aa)) is the KH type-2 domain.

This sequence belongs to the universal ribosomal protein uS3 family. Part of the 30S ribosomal subunit. Forms a tight complex with proteins S10 and S14.

Functionally, binds the lower part of the 30S subunit head. Binds mRNA in the 70S ribosome, positioning it for translation. The chain is Small ribosomal subunit protein uS3 from Exiguobacterium sibiricum (strain DSM 17290 / CCUG 55495 / CIP 109462 / JCM 13490 / 255-15).